A 208-amino-acid chain; its full sequence is Large ribosomal subunit protein eL13 (208 aa).

Phosphoserine is present on residues S177 and S180.

The protein belongs to the eukaryotic ribosomal protein eL13 family. Component of the large ribosomal subunit (LSU). Mature yeast ribosomes consist of a small (40S) and a large (60S) subunit. The 40S small subunit contains 1 molecule of ribosomal RNA (18S rRNA) and at least 33 different proteins. The large 60S subunit contains 3 rRNA molecules (25S, 5.8S and 5S rRNA) and at least 46 different proteins.

It localises to the cytoplasm. Component of the ribosome, a large ribonucleoprotein complex responsible for the synthesis of proteins in the cell. The small ribosomal subunit (SSU) binds messenger RNAs (mRNAs) and translates the encoded message by selecting cognate aminoacyl-transfer RNA (tRNA) molecules. The large subunit (LSU) contains the ribosomal catalytic site termed the peptidyl transferase center (PTC), which catalyzes the formation of peptide bonds, thereby polymerizing the amino acids delivered by tRNAs into a polypeptide chain. The nascent polypeptides leave the ribosome through a tunnel in the LSU and interact with protein factors that function in enzymatic processing, targeting, and the membrane insertion of nascent chains at the exit of the ribosomal tunnel. The chain is Large ribosomal subunit protein eL13 (rpl13) from Schizosaccharomyces pombe (strain 972 / ATCC 24843) (Fission yeast).